Consider the following 353-residue polypeptide: 3-isopropylmalate dehydrogenase (353 aa).

Residues arginine 97, arginine 107, arginine 135, and aspartate 219 each contribute to the substrate site. 3 residues coordinate Mg(2+): aspartate 219, aspartate 243, and aspartate 247.

It belongs to the isocitrate and isopropylmalate dehydrogenases family. LeuB type 1 subfamily. Homodimer. Mg(2+) serves as cofactor. Requires Mn(2+) as cofactor.

It localises to the cytoplasm. It carries out the reaction (2R,3S)-3-isopropylmalate + NAD(+) = 4-methyl-2-oxopentanoate + CO2 + NADH. It functions in the pathway amino-acid biosynthesis; L-leucine biosynthesis; L-leucine from 3-methyl-2-oxobutanoate: step 3/4. Catalyzes the oxidation of 3-carboxy-2-hydroxy-4-methylpentanoate (3-isopropylmalate) to 3-carboxy-4-methyl-2-oxopentanoate. The product decarboxylates to 4-methyl-2 oxopentanoate. This is 3-isopropylmalate dehydrogenase from Bacteroides fragilis (strain ATCC 25285 / DSM 2151 / CCUG 4856 / JCM 11019 / LMG 10263 / NCTC 9343 / Onslow / VPI 2553 / EN-2).